We begin with the raw amino-acid sequence, 78 residues long: Serine rich endogenous peptide 12 (78 aa).

The signal sequence occupies residues 1–24 (MRNTISSKMGQVLIVLLLLCTVLC). Positions 25–43 (RTESALPSGQHSVLLTGRR) are cleaved as a propeptide — removed in mature form. A disordered region spans residues 47 to 78 (SGASGPVRSSQSSQAGGRFNDADPIAIDYGKY). The SCOOP motif signature appears at 50–64 (SGPVRSSQSSQAGGR). The SxS motif essential for MIK2 binding motif lies at 56-58 (SQS).

Belongs to the serine rich endogenous peptide (SCOOP) phytocytokine family. Interacts with MIK2 (via extracellular leucine-rich repeat domain); this interaction triggers the formation of complex between MIK2 and the BAK1/SERK3 and SERK4 coreceptors, and subsequent BAK1 activation by phosphorylation on 'Ser-612'. Mostly expressed in the whole root system, and, to a lower extent, in seedlings shoots.

Its subcellular location is the cell membrane. It is found in the secreted. The protein localises to the extracellular space. It localises to the apoplast. In terms of biological role, brassicaceae-specific phytocytokine (plant endogenous peptide released into the apoplast) perceived by MIK2 in a BAK1/SERK3 and SERK4 coreceptors-dependent manner, that modulates various physiological and antimicrobial processes including root growth prevention, phospholipid signaling pathway activation (e.g. accumulation of phosphatidic acid (PA), but transient reduction of phosphatidylinositol 4,5-bisphosphate (PIP(2)) levels) and reactive oxygen species (ROS) response regulation. Moderates primary root growth, and regulates root meristems and cell elongation; this root growth regulation is associated with the modulation of ROS metabolism and alteration of cell wall structure, and depends on variations in many genes expression. Promotes ROS (e.g. superoxide anion O(2) and hydrogen peroxide H(2)O(2)) production and MAPK (e.g. MPK3, MPK4 and MPK6) activation in a MIK2-dependent manner, thus leading to the up-regulation of immune-related marker genes (e.g. WRKY30, WRKY33 and CYP81F2). Involved in biotic and oxidative stress responses; acts as a negative regulator of defense against necrotrophic pathogens such as the bacteria Erwinia amylovora and the fungus Alternaria brassicicola. Able to prime defense responses against the pathogenic bacteria Pseudomonas syringae pv. tomato DC3000. Contributes to the triggering of defense responses toward generalist herbivores such as Spodoptera littoralis, probably via the activation of jasmonate and indole glucosinolate biosynthesis. Triggers the expression of several PROSCOOP genes (e.g. PROSCOOP3, PROSCOOP7, PROSCOOP12 and PROSCOOP13). This is Serine rich endogenous peptide 12 from Arabidopsis thaliana (Mouse-ear cress).